Consider the following 272-residue polypeptide: Probable glutathione S-transferase DHAR2, chloroplastic (272 aa).

The N-terminal 57 residues, 1 to 57 (MAVLLRTTTSATTATSGGSSSATALLATTFRRGGRRLLLLPATRGSAPRRAALLTAR), are a transit peptide targeting the chloroplast. Residues Lys-68 and Asp-79 each coordinate glutathione. Lys-68 and Asp-79 together coordinate L-ascorbate. Positions 70-148 (SLTVPDRLGD…AIEEKYPEPS (79 aa)) constitute a GST N-terminal domain. Cys-80 acts as the Nucleophile in catalysis. Glutathione is bound by residues Lys-107, Val-120, Ser-133, His-219, and Trp-266. Residues 126-272 (EEQWVADSDV…IAGWRPKVMG (147 aa)) form the GST C-terminal domain. Position 269 (Lys-269) interacts with L-ascorbate.

Belongs to the GST superfamily. DHAR family. Monomer.

The protein localises to the plastid. It localises to the chloroplast. The enzyme catalyses RX + glutathione = an S-substituted glutathione + a halide anion + H(+). It catalyses the reaction L-dehydroascorbate + 2 glutathione = glutathione disulfide + L-ascorbate. Its function is as follows. Involved in ascorbate homeostasis. Maintains redox pools of ascorbate by recycling dihydroascorbate (DHA) to ascorbate. Involved in scavenging reactive oxygen species (ROS) under oxidative stresses. The chain is Probable glutathione S-transferase DHAR2, chloroplastic from Oryza sativa subsp. japonica (Rice).